The following is a 545-amino-acid chain: Metal transporter NRAT1 (545 aa).

The next 12 helical transmembrane spans lie at 51–71 (FLAH…PSNL), 84–104 (ELLW…TLAA), 128–148 (IFLW…EVLG), 155–175 (ILLK…TLLL), 188–208 (FIIA…LSYL), 234–254 (IALF…ALVL), 278–298 (LAFI…GSIC), 333–353 (VVYA…CTFA), 373–395 (LITR…PSGA), 398–418 (LIIL…IPLL), 437–457 (VVIA…FLVW), and 474–494 (GLIS…VVYL). The tract at residues 516 to 545 (EAGGTPVVDASAADEDQPAPYRKDLADASM) is disordered. A compositionally biased stretch (basic and acidic residues) spans 536 to 545 (YRKDLADASM).

Belongs to the NRAMP (TC 2.A.55) family. As to expression, expressed at low levels in roots.

Its subcellular location is the cell membrane. Metal transporter that transports the trivalent cation aluminum (Al(3+)), but does not seem to transport divalent cations such as iron (Fe(2+)), manganese (Mg(2+)) or Cadmium (Cd(2+)). Involved in Al tolerance by taking up Al in root cells, where it is detoxified by chelation with organic acid anions and sequestration into the vacuoles. This chain is Metal transporter NRAT1 (NRAT1), found in Oryza sativa subsp. japonica (Rice).